We begin with the raw amino-acid sequence, 166 residues long: Co-chaperone protein HscB homolog (166 aa).

The J domain occupies 3–75 (QYFTLFRIEP…IDRAAYLLKT (73 aa)).

The protein belongs to the HscB family. In terms of assembly, interacts with HscA and stimulates its ATPase activity.

In terms of biological role, co-chaperone involved in the maturation of iron-sulfur cluster-containing proteins. Seems to help targeting proteins to be folded toward HscA. This chain is Co-chaperone protein HscB homolog, found in Neisseria meningitidis serogroup A / serotype 4A (strain DSM 15465 / Z2491).